The primary structure comprises 567 residues: Serine/threonine-protein kinase SSN3 (567 aa).

One can recognise a Protein kinase domain in the interval 68-470 (YEIIGYIAAG…AINALDHSYF (403 aa)). 74-82 (IAAGTYGKV) contributes to the ATP binding site. The tract at residues 88–179 (RQSSKSSSST…RNSENTDNRR (92 aa)) is disordered. The segment covering 90-101 (SSKSSSSTGSDS) has biased composition (low complexity). Composition is skewed to polar residues over residues 102 to 122 (LAQD…QNAG) and 133 to 150 (PNSN…ELST). The segment covering 167-179 (GDKRNSENTDNRR) has biased composition (basic and acidic residues). Residue lysine 190 coordinates ATP. The active-site Proton acceptor is aspartate 293. Over residues 546–556 (AVSGNSSSQSS) the composition is skewed to low complexity. The interval 546–567 (AVSGNSSSQSSRNMEPMKKKRK) is disordered.

It belongs to the protein kinase superfamily. CMGC Ser/Thr protein kinase family. CDC2/CDKX subfamily. In terms of assembly, component of the SRB8-11 complex, a regulatory module of the Mediator complex. Mg(2+) serves as cofactor.

The protein resides in the nucleus. The enzyme catalyses L-seryl-[protein] + ATP = O-phospho-L-seryl-[protein] + ADP + H(+). It catalyses the reaction L-threonyl-[protein] + ATP = O-phospho-L-threonyl-[protein] + ADP + H(+). It carries out the reaction [DNA-directed RNA polymerase] + ATP = phospho-[DNA-directed RNA polymerase] + ADP + H(+). In terms of biological role, component of the SRB8-11 complex. The SRB8-11 complex is a regulatory module of the Mediator complex which is itself involved in regulation of basal and activated RNA polymerase II-dependent transcription. The SRB8-11 complex may be involved in the transcriptional repression of a subset of genes regulated by Mediator. It may inhibit the association of the Mediator complex with RNA polymerase II to form the holoenzyme complex. The SRB8-11 complex phosphorylates the C-terminal domain (CTD) of the largest subunit of RNA polymerase II. In Candida glabrata (strain ATCC 2001 / BCRC 20586 / JCM 3761 / NBRC 0622 / NRRL Y-65 / CBS 138) (Yeast), this protein is Serine/threonine-protein kinase SSN3 (SSN3).